A 600-amino-acid polypeptide reads, in one-letter code: Estrogen receptor (600 aa).

The segment at 1–189 (MTMTLHTKAS…IMESAKETRY (189 aa)) is modulating (transactivation AF-1); mediates interaction with MACROD1. A glycan (O-linked (GlcNAc) serine) is linked at serine 10. Residues 35–47 (MERALGEVYVDNS) are required for interaction with NCOA1. The interval 35–179 (MERALGEVYV…LSSSSEKGNM (145 aa)) is interaction with DDX5; self-association. Residues serine 109 and serine 111 each carry the phosphoserine; by CDK2 modification. The residue at position 123 (serine 123) is a Phosphoserine. Residues 148-177 (DTGPPAFYRSNSDNRRQNGRERLSSSSEKG) are disordered. A compositionally biased stretch (basic and acidic residues) spans 159 to 170 (SDNRRQNGRERL). A Phosphoserine; by CK2 modification is found at serine 172. 2 NR C4-type zinc fingers span residues 190 to 210 (CAVC…CEGC) and 226 to 250 (CPAT…LRKC). Positions 190-255 (CAVCNDYASG…RLRKCYEVGM (66 aa)) form a DNA-binding region, nuclear receptor. A mediates interaction with DNTTIP2 region spans residues 190-315 (CAVCNDYASG…TKKNSPALSL (126 aa)). The segment at 256-315 (MKGGIRKDRRGGRMLKHKRQRDDLEGRNEMGTSGDMRAANLWPSPLVIKHTKKNSPALSL) is hinge. The residue at position 265 (arginine 265) is an Asymmetric dimethylarginine; by PRMT1. Positions 267-600 (GRMLKHKRQR…PEAEGFPNTI (334 aa)) are interaction with AKAP13. A self-association region spans residues 269 to 600 (MLKHKRQRDD…PEAEGFPNTI (332 aa)). Positions 316–552 (TADQMVSALL…DLLLEMLDAH (237 aa)) constitute an NR LBD domain. Residues 316 to 600 (TADQMVSALL…PEAEGFPNTI (285 aa)) form a transactivation AF-2 region. Residues glutamate 358 and arginine 399 each coordinate 17beta-estradiol. Cysteine 452 is lipidated: S-palmitoyl cysteine. Histidine 529 lines the 17beta-estradiol pocket. Tyrosine 542 is subject to Phosphotyrosine; by Tyr-kinases. Positions 558–581 (ASRMGVPPEEPSQSQLTTTSSTSA) are disordered. Residues 569-581 (SQSQLTTTSSTSA) show a composition bias toward low complexity. O-linked (GlcNAc) threonine glycosylation occurs at threonine 576.

It belongs to the nuclear hormone receptor family. NR3 subfamily. In terms of assembly, interacts with BCAS3. Binds DNA as a homodimer. Can form a heterodimer with ESR2. Interacts with coactivator NCOA5. Interacts with PELP1, the interaction is enhanced by 17-beta-estradiol; the interaction increases ESR1 transcriptional activity. Interacts with NCOA7; the interaction is ligand-inducible. Interacts with AKAP13, CUEDC2, HEXIM1, KDM5A, MAP1S, SMARD1, and UBE1C. Interacts with MUC1; the interaction is stimulated by 7 beta-estradiol (E2) and enhances ESR1-mediated transcription. Interacts with DNTTIP2, and UIMC1. Interacts with KMT2D/MLL2. Interacts with ATAD2; the interaction is enhanced by estradiol. Interacts with KIF18A and LDB1. Interacts with RLIM (via its C-terminus). Interacts with MACROD1. Interacts with SH2D4A and PLCG. Interacts with SH2D4A; the interaction blocks binding to PLCG and inhibits estrogen-induced cell proliferation. Interacts with DYNLL1. Interacts with CCDC62; the interaction requires estradiol and appears to enhance the transcription of target genes. Interacts with NR2C1; the interaction prevents homodimerization of ESR1 and suppresses its transcriptional activity and cell growth. Interacts with DNAAF4. Interacts with PRMT2. Interacts with RBFOX2. Interacts with EP300; the interaction is estrogen-dependent and enhanced by CITED1. Interacts with CITED1; the interaction is estrogen-dependent. Interacts with FAM120B, FOXL2, PHB2 and SLC30A9. Interacts with coactivators NCOA3 and NCOA6. Interacts with STK3/MST2 only in the presence of SAV1 and vice-versa. Binds to CSNK1D. Interacts with NCOA2; NCOA2 can interact with ESR1 AF-1 and AF-2 domains simultaneously and mediate their transcriptional synergy. Interacts with DDX5. Interacts with NCOA1; the interaction seems to require a self-association of N-terminal and C-terminal regions. Interacts with ZNF366, DDX17, NFKB1, RELA, SP1 and SP3. Interacts with NRIP1. Interacts with GPER1; the interaction occurs in an estrogen-dependent manner. Interacts with TRIP4 (ufmylated); estrogen dependent. Interacts with LMTK3; the interaction phosphorylates ESR1 (in vitro) and protects it against proteasomal degradation. Interacts with CCAR2 (via N-terminus) in a ligand-independent manner. Interacts with ZFHX3. Interacts with SFR1 in a ligand-dependent and -independent manner. Interacts with DCAF13, LATS1 and DCAF1; regulates ESR1 ubiquitination and ubiquitin-mediated proteasomal degradation. Interacts (via DNA-binding domain) with POU4F2 (C-terminus); this interaction increases the estrogen receptor ESR1 transcriptional activity in a DNA- and ligand 17-beta-estradiol-independent manner. Interacts with ESRRB isoform 1. Interacts with UBE3A and WBP2. Interacts with GTF2B. Interacts with RBM39. In the absence of hormonal ligand, interacts with TACC1. Interacts with PI3KR1 or PI3KR2 and PTK2/FAK1. Interacts with SRC. Interacts with BAG1; the interaction is promoted in the absence of estradiol (17-beta-estradiol/E2). Interacts with and ubiquitinated by STUB1; the interaction is promoted in the absence of estradiol (17-beta-estradiol/E2). Interacts with NEDD8. Post-translationally, phosphorylated by cyclin A/CDK2 and CK1. Phosphorylation probably enhances transcriptional activity. Dephosphorylation at Ser-123 by PPP5C inhibits its transactivation activity. Phosphorylated by LMTK3 (in vitro). Ubiquitinated; regulated by LATS1 via DCAF1 it leads to ESR1 proteasomal degradation. Deubiquitinated by OTUB1. Ubiquitinated by STUB1/CHIP; in the CA1 hippocampal region following loss of endogenous circulating estradiol (17-beta-estradiol/E2). Ubiquitinated by UBR5, leading to its degradation: UBR5 specifically recognizes and binds ligand-bound ESR1 when it is not associated with coactivators (NCOAs). In presence of NCOAs, the UBR5-degron is not accessible, preventing its ubiquitination and degradation. In terms of processing, palmitoylated at Cys-452 by ZDHHC7 and ZDHHC21. This modification is required for plasma membrane targeting and for rapid intracellular signaling via ERK and AKT kinases and cAMP generation, but not for signaling mediated by the nuclear hormone receptor. Post-translationally, dimethylated by PRMT1 at Arg-265. The methylation may favor cytoplasmic localization. Demethylated by JMJD6 at Arg-265. In terms of tissue distribution, expressed in the CA1 region of the hippocampus, expression decreases with age (at protein level). Expressed in the uterus (at protein level).

The protein localises to the nucleus. It is found in the cytoplasm. The protein resides in the golgi apparatus. Its subcellular location is the cell membrane. In terms of biological role, nuclear hormone receptor. The steroid hormones and their receptors are involved in the regulation of eukaryotic gene expression and affect cellular proliferation and differentiation in target tissues. Ligand-dependent nuclear transactivation involves either direct homodimer binding to a palindromic estrogen response element (ERE) sequence or association with other DNA-binding transcription factors, such as AP-1/c-Jun, c-Fos, ATF-2, Sp1 and Sp3, to mediate ERE-independent signaling. Ligand binding induces a conformational change allowing subsequent or combinatorial association with multiprotein coactivator complexes through LXXLL motifs of their respective components. Mutual transrepression occurs between the estrogen receptor (ER) and NF-kappa-B in a cell-type specific manner. Decreases NF-kappa-B DNA-binding activity and inhibits NF-kappa-B-mediated transcription from the IL6 promoter and displace RELA/p65 and associated coregulators from the promoter. Recruited to the NF-kappa-B response element of the CCL2 and IL8 promoters and can displace CREBBP. Present with NF-kappa-B components RELA/p65 and NFKB1/p50 on ERE sequences. Can also act synergistically with NF-kappa-B to activate transcription involving respective recruitment adjacent response elements; the function involves CREBBP. Can activate the transcriptional activity of TFF1. Also mediates membrane-initiated estrogen signaling involving various kinase cascades. Essential for MTA1-mediated transcriptional regulation of BRCA1 and BCAS3. Maintains neuronal survival in response to ischemic reperfusion injury when in the presence of circulating estradiol (17-beta-estradiol/E2). The sequence is that of Estrogen receptor (Esr1) from Rattus norvegicus (Rat).